The chain runs to 286 residues: Interferon-induced 35 kDa protein homolog (286 aa).

The segment at Leu5–Leu26 is leucine-zipper. NID domains are found at residues Ala81–Glu170 and Phe183–Glu266.

This sequence belongs to the NMI family. In terms of assembly, homodimer. Also interacts with B-ATF. Interacts with TRIM21. Interacts (via NID domains) with NMI (via NID domains); the interaction is direct and is facilitated by TRIM21. In terms of processing, phosphorylated. Dephosphorylation correlates with the formation of a complex with NMI.

It is found in the cytoplasm. The protein resides in the nucleus. It localises to the secreted. In terms of biological role, acts as a signaling pathway regulator involved in innate immune system response. In response to interferon IFN-alpha, associates in a complex with transcriptional regulator NMI to regulate immune response; the complex formation prevents proteasome-mediated degradation of IFI35 and correlates with IFI35 dephosphorylation. In complex with NMI, inhibits virus-triggered type I interferon/IFN-beta production. In complex with NMI, negatively regulates nuclear factor NF-kappa-B signaling by inhibiting the nuclear translocation, activation and transcription of the NF-kappa-B subunit p65/RELA, resulting in the inhibition of endothelial cell proliferation, migration and re-endothelialization of injured arteries. Beside its role as an intracellular signaling pathway regulator, also functions extracellularly as damage-associated molecular patterns (DAMPs) to promote inflammation when actively released by macrophage to the extracellular space during cell injury and pathogen invasion. Macrophage-secreted IFI35 activates NF-kappa-B signaling in adjacent macrophages through Toll-like receptor 4/TLR4 activation, thereby inducing NF-kappa-B translocation from the cytoplasm into the nucleus which promotes the release of pro-inflammatory cytokines. The polypeptide is Interferon-induced 35 kDa protein homolog (Mus musculus (Mouse)).